Reading from the N-terminus, the 248-residue chain is uncharacterized protein (248 aa).

To M.jannaschii MJ1452.

This is an uncharacterized protein from Methanothermobacter thermautotrophicus (strain ATCC 29096 / DSM 1053 / JCM 10044 / NBRC 100330 / Delta H) (Methanobacterium thermoautotrophicum).